The following is a 344-amino-acid chain: MEDLQLVLFVLGAIAIVAVLVHGFWSIRRQQPKSLKDSPMGNFYKKQAERGEAAPAPKRVDAEGFDSDGIGAVRVRKASESQTPEAPAVNPYLKQEAKVEPQIEPKPQFKQEPSMAQPDFSLQSPSVDEPHRGTKASRQEPVLKSNTAHLNQEHAGQSHAAMVAQKVAEEQRAQVQKPTQTALFDDEVYQEQQPQAVEEAPETEESLGEPRDVLVLHVVAKEGQQLNGAELLPCFLTLNFKYGDMNIFHRHVDNAGNGKVLFSIANMVKPGVFDPDNMEQFSTLGVVFFMTLPCYGDALMNFSIMLNSARQLADDIDAVVLDGQRQPWGEFTKQDYLHRIRANA.

Topologically, residues Met-1–Leu-6 are periplasmic. A helical transmembrane segment spans residues Val-7–Ile-27. Residues Arg-28–Ala-344 are Cytoplasmic-facing. Disordered stretches follow at residues Val-75 to Lys-94 and Gln-108 to Gln-139.

Belongs to the ZipA family. In terms of assembly, interacts with FtsZ via their C-terminal domains.

The protein localises to the cell inner membrane. Essential cell division protein that stabilizes the FtsZ protofilaments by cross-linking them and that serves as a cytoplasmic membrane anchor for the Z ring. Also required for the recruitment to the septal ring of downstream cell division proteins. The polypeptide is Cell division protein ZipA (Shewanella oneidensis (strain ATCC 700550 / JCM 31522 / CIP 106686 / LMG 19005 / NCIMB 14063 / MR-1)).